We begin with the raw amino-acid sequence, 509 residues long: Methionine--tRNA ligase (509 aa).

Residues 12–22 (YYVNDVPHIGH) carry the 'HIGH' region motif. The 'KMSKS' region signature appears at 295–299 (KISKS). An ATP-binding site is contributed by K298.

It belongs to the class-I aminoacyl-tRNA synthetase family. MetG type 2B subfamily. In terms of assembly, monomer.

It is found in the cytoplasm. The catalysed reaction is tRNA(Met) + L-methionine + ATP = L-methionyl-tRNA(Met) + AMP + diphosphate. Its function is as follows. Is required not only for elongation of protein synthesis but also for the initiation of all mRNA translation through initiator tRNA(fMet) aminoacylation. The chain is Methionine--tRNA ligase from Rickettsia bellii (strain RML369-C).